The sequence spans 206 residues: Holliday junction branch migration complex subunit RuvA (206 aa).

A domain I region spans residues 1-67 (MIASIFGKIT…QILEEGFAFN (67 aa)). Residues 68–141 (TLEEKEWFSK…YDRDDGGKRI (74 aa)) form a domain II region. Residues 141–145 (IKPNT) form a flexible linker region. The segment at 146-206 (AMANDYDEMF…QNNEVTNKTA (61 aa)) is domain III.

This sequence belongs to the RuvA family. Homotetramer. Forms an RuvA(8)-RuvB(12)-Holliday junction (HJ) complex. HJ DNA is sandwiched between 2 RuvA tetramers; dsDNA enters through RuvA and exits via RuvB. An RuvB hexamer assembles on each DNA strand where it exits the tetramer. Each RuvB hexamer is contacted by two RuvA subunits (via domain III) on 2 adjacent RuvB subunits; this complex drives branch migration. In the full resolvosome a probable DNA-RuvA(4)-RuvB(12)-RuvC(2) complex forms which resolves the HJ.

It localises to the cytoplasm. In terms of biological role, the RuvA-RuvB-RuvC complex processes Holliday junction (HJ) DNA during genetic recombination and DNA repair, while the RuvA-RuvB complex plays an important role in the rescue of blocked DNA replication forks via replication fork reversal (RFR). RuvA specifically binds to HJ cruciform DNA, conferring on it an open structure. The RuvB hexamer acts as an ATP-dependent pump, pulling dsDNA into and through the RuvAB complex. HJ branch migration allows RuvC to scan DNA until it finds its consensus sequence, where it cleaves and resolves the cruciform DNA. The protein is Holliday junction branch migration complex subunit RuvA of Mycoplasma pneumoniae (strain ATCC 29342 / M129 / Subtype 1) (Mycoplasmoides pneumoniae).